Consider the following 136-residue polypeptide: Small integral membrane protein 23 (136 aa).

The Cytoplasmic segment spans residues Met-1–Gln-31. The chain crosses the membrane as a helical; Signal-anchor for type II membrane protein span at residues Thr-32–Trp-52. The Extracellular segment spans residues Glu-53–Thr-136. Positions Leu-92–Leu-124 form a coiled coil.

Its subcellular location is the membrane. This Mus musculus (Mouse) protein is Small integral membrane protein 23 (Smim23).